The following is a 190-amino-acid chain: Elongation factor P (190 aa).

Lys-34 carries the N6-(3,6-diaminohexanoyl)-5-hydroxylysine modification.

It belongs to the elongation factor P family. Post-translationally, may be beta-lysylated on the epsilon-amino group of Lys-34 by the combined action of EpmA and EpmB, and then hydroxylated on the C5 position of the same residue by EpmC (if this protein is present). Lysylation is critical for the stimulatory effect of EF-P on peptide-bond formation. The lysylation moiety may extend toward the peptidyltransferase center and stabilize the terminal 3-CCA end of the tRNA. Hydroxylation of the C5 position on Lys-34 may allow additional potential stabilizing hydrogen-bond interactions with the P-tRNA.

The protein localises to the cytoplasm. Its pathway is protein biosynthesis; polypeptide chain elongation. Its function is as follows. Involved in peptide bond synthesis. Alleviates ribosome stalling that occurs when 3 or more consecutive Pro residues or the sequence PPG is present in a protein, possibly by augmenting the peptidyl transferase activity of the ribosome. Modification of Lys-34 is required for alleviation. In Hahella chejuensis (strain KCTC 2396), this protein is Elongation factor P.